We begin with the raw amino-acid sequence, 312 residues long: Ribonuclease Z (312 aa).

Zn(2+) is bound by residues His-62, His-64, Asp-66, His-67, His-144, Asp-215, and His-273. The Proton acceptor role is filled by Asp-66.

This sequence belongs to the RNase Z family. As to quaternary structure, homodimer. The cofactor is Zn(2+).

It catalyses the reaction Endonucleolytic cleavage of RNA, removing extra 3' nucleotides from tRNA precursor, generating 3' termini of tRNAs. A 3'-hydroxy group is left at the tRNA terminus and a 5'-phosphoryl group is left at the trailer molecule.. Functionally, zinc phosphodiesterase, which displays some tRNA 3'-processing endonuclease activity. Probably involved in tRNA maturation, by removing a 3'-trailer from precursor tRNA. The chain is Ribonuclease Z from Prochlorococcus marinus (strain MIT 9215).